The chain runs to 156 residues: MDKIPMTRAGFTALDDELKTLKTVERPAVIRSIAEAREHGDLSENAEYHAAREKQSFIEGRIKELEAILSLAEVIDPAKLSGSIKFGATVTILDEETEEERTYQIVGEAEADIEAGLLNIKSPLARALIGKDEGDSIEVKTPGGERGYEVVSVRFV.

The stretch at 46–67 (AEYHAAREKQSFIEGRIKELEA) forms a coiled coil.

The protein belongs to the GreA/GreB family.

Necessary for efficient RNA polymerase transcription elongation past template-encoded arresting sites. The arresting sites in DNA have the property of trapping a certain fraction of elongating RNA polymerases that pass through, resulting in locked ternary complexes. Cleavage of the nascent transcript by cleavage factors such as GreA or GreB allows the resumption of elongation from the new 3'terminus. GreA releases sequences of 2 to 3 nucleotides. The sequence is that of Transcription elongation factor GreA from Cereibacter sphaeroides (strain ATCC 17029 / ATH 2.4.9) (Rhodobacter sphaeroides).